A 122-amino-acid polypeptide reads, in one-letter code: Large ribosomal subunit protein uL14 (122 aa).

Belongs to the universal ribosomal protein uL14 family. As to quaternary structure, part of the 50S ribosomal subunit. Forms a cluster with proteins L3 and L19. In the 70S ribosome, L14 and L19 interact and together make contacts with the 16S rRNA in bridges B5 and B8.

Its function is as follows. Binds to 23S rRNA. Forms part of two intersubunit bridges in the 70S ribosome. The sequence is that of Large ribosomal subunit protein uL14 from Polaromonas naphthalenivorans (strain CJ2).